The primary structure comprises 126 residues: NADH-quinone oxidoreductase subunit A (126 aa).

3 consecutive transmembrane segments (helical) span residues 11-31, 64-84, and 98-118; these read IAIQ…SSWL, FLVA…YPWA, and EGFV…IYVI.

Belongs to the complex I subunit 3 family. In terms of assembly, NDH-1 is composed of 14 different subunits. Subunits NuoA, H, J, K, L, M, N constitute the membrane sector of the complex.

It localises to the cell inner membrane. The enzyme catalyses a quinone + NADH + 5 H(+)(in) = a quinol + NAD(+) + 4 H(+)(out). Its function is as follows. NDH-1 shuttles electrons from NADH, via FMN and iron-sulfur (Fe-S) centers, to quinones in the respiratory chain. The immediate electron acceptor for the enzyme in this species is believed to be a menaquinone. Couples the redox reaction to proton translocation (for every two electrons transferred, four hydrogen ions are translocated across the cytoplasmic membrane), and thus conserves the redox energy in a proton gradient. In Cytophaga hutchinsonii (strain ATCC 33406 / DSM 1761 / CIP 103989 / NBRC 15051 / NCIMB 9469 / D465), this protein is NADH-quinone oxidoreductase subunit A.